Here is an 887-residue protein sequence, read N- to C-terminus: DNA mismatch repair protein MutS (887 aa).

Gly602–Ser609 contributes to the ATP binding site.

The protein belongs to the DNA mismatch repair MutS family.

Functionally, this protein is involved in the repair of mismatches in DNA. It is possible that it carries out the mismatch recognition step. This protein has a weak ATPase activity. This Staphylococcus saprophyticus subsp. saprophyticus (strain ATCC 15305 / DSM 20229 / NCIMB 8711 / NCTC 7292 / S-41) protein is DNA mismatch repair protein MutS.